An 891-amino-acid chain; its full sequence is Probable serine/threonine-protein kinase mkcC (891 aa).

5 disordered regions span residues 24-70 (IELN…TATI), 85-121 (ANNN…APSS), 264-435 (DDPQ…AREK), 495-526 (NSLG…PEVS), and 565-588 (TTAS…DDYD). The segment covering 29 to 41 (QEEQQQPEQQEQP) has biased composition (low complexity). Over residues 45-58 (EELKDNNEKIKTSE) the composition is skewed to basic and acidic residues. Composition is skewed to low complexity over residues 61–70 (TTTTTTTATI), 86–105 (NNNT…LNNN), 297–314 (STSN…TTGK), 322–360 (SNSS…SGTS), and 379–397 (TTGN…TTSS). Positions 422–432 (RKRKEQKRSRA) are enriched in basic residues. Residues 495 to 522 (NSLGSSINKNNSNNTTTTTTTTNTNNKS) show a composition bias toward low complexity. One can recognise a Protein kinase domain in the interval 616–864 (YKNLKQIGSG…AEQLLKHPWI (249 aa)). ATP is bound by residues 622–630 (IGSGGFGSV) and Lys645. Residue Asp735 is the Proton acceptor of the active site.

Belongs to the protein kinase superfamily. STE Ser/Thr protein kinase family. STE20 subfamily. Mg(2+) is required as a cofactor.

It catalyses the reaction L-seryl-[protein] + ATP = O-phospho-L-seryl-[protein] + ADP + H(+). The catalysed reaction is L-threonyl-[protein] + ATP = O-phospho-L-threonyl-[protein] + ADP + H(+). The chain is Probable serine/threonine-protein kinase mkcC from Dictyostelium discoideum (Social amoeba).